Reading from the N-terminus, the 152-residue chain is UPF0178 protein KPK_4355 (152 aa).

The protein belongs to the UPF0178 family.

This chain is UPF0178 protein KPK_4355, found in Klebsiella pneumoniae (strain 342).